The following is a 397-amino-acid chain: Odorant receptor 98a (397 aa).

Residues 1–43 are Cytoplasmic-facing; the sequence is MLFNYLRKPNPTNLLTSPDSFRYFEYGMFCMGWHTPATHKIIY. A helical membrane pass occupies residues 44–64; it reads YITSCLIFAWCAVYLPIGIII. Over 65-77 the chain is Extracellular; it reads SFKTDINTFTPNE. Residues 78–98 form a helical membrane-spanning segment; sequence LLTVMQLFFNSVGMPFKVLFF. The Cytoplasmic portion of the chain corresponds to 99–138; the sequence is NLYISGFYKAKKLLSEMDKRCTTLKERVEVHQGVVRCNKA. Residues 139–159 form a helical membrane-spanning segment; that stretch reads YLIYQFIYTAYTISTFLSAAL. At 160-192 the chain is on the extracellular side; that stretch reads SGKLPWRIYNPFVDFRESRSSFWKAALNETALM. N-linked (GlcNAc...) asparagine glycosylation occurs at N187. The helical transmembrane segment at 193–213 threads the bilayer; sequence LFAVTQTLMSDIYPLLYGLIL. The Cytoplasmic segment spans residues 214–266; that stretch reads RVHLKLLRLRVESLCTDSGKSDAENEQDLIKCIKDHNLIIDYAAAIRPAVTRT. The helical transmembrane segment at 267–287 threads the bilayer; sequence IFVQFLLIGICLGLSMINLLF. The Extracellular segment spans residues 288–293; sequence FADIWT. Residues 294-314 traverse the membrane as a helical segment; the sequence is GLATVAYINGLMVQTFPFCFV. Topologically, residues 315-354 are cytoplasmic; sequence CDLLKKDCELLVSAIFHSNWINSSRSYKSSLRYFLKNAQK. The helical transmembrane segment at 355 to 375 threads the bilayer; sequence SIAFTAGSIFPISTGSNIKVA. The Extracellular segment spans residues 376 to 397; it reads KLAFSVVTFVNQLNIADRLTKN.

This sequence belongs to the insect chemoreceptor superfamily. Heteromeric odorant receptor channel (TC 1.A.69) family. Or2a subfamily. As to quaternary structure, interacts with Orco. Complexes exist early in the endomembrane system in olfactory sensory neurons (OSNs), coupling these complexes to the conserved ciliary trafficking pathway. In terms of tissue distribution, expressed in olfactory sensory neurons in the antenna.

Its subcellular location is the cell membrane. In terms of biological role, odorant receptor which mediates acceptance or avoidance behavior, depending on its substrates. The odorant receptor repertoire encodes a large collection of odor stimuli that vary widely in identity, intensity, and duration. May form a complex with Orco to form odorant-sensing units, providing sensitive and prolonged odorant signaling and calcium permeability. The polypeptide is Odorant receptor 98a (Or98a) (Drosophila melanogaster (Fruit fly)).